A 426-amino-acid polypeptide reads, in one-letter code: Serine--tRNA ligase (426 aa).

230 to 232 (TSE) is a binding site for L-serine. 261 to 263 (RKE) contributes to the ATP binding site. Glutamate 284 serves as a coordination point for L-serine. An ATP-binding site is contributed by 348 to 351 (EISS). L-serine is bound at residue serine 385.

The protein belongs to the class-II aminoacyl-tRNA synthetase family. Type-1 seryl-tRNA synthetase subfamily. As to quaternary structure, homodimer. The tRNA molecule binds across the dimer.

It localises to the cytoplasm. It carries out the reaction tRNA(Ser) + L-serine + ATP = L-seryl-tRNA(Ser) + AMP + diphosphate + H(+). The catalysed reaction is tRNA(Sec) + L-serine + ATP = L-seryl-tRNA(Sec) + AMP + diphosphate + H(+). The protein operates within aminoacyl-tRNA biosynthesis; selenocysteinyl-tRNA(Sec) biosynthesis; L-seryl-tRNA(Sec) from L-serine and tRNA(Sec): step 1/1. Catalyzes the attachment of serine to tRNA(Ser). Is also able to aminoacylate tRNA(Sec) with serine, to form the misacylated tRNA L-seryl-tRNA(Sec), which will be further converted into selenocysteinyl-tRNA(Sec). The polypeptide is Serine--tRNA ligase (Wolbachia pipientis subsp. Culex pipiens (strain wPip)).